The chain runs to 201 residues: Dephospho-CoA kinase (201 aa).

The DPCK domain occupies 4–201 (AFFVTASIAC…VIQEISKGNM (198 aa)). 12-17 (ACGKST) serves as a coordination point for ATP.

It belongs to the CoaE family.

The protein localises to the cytoplasm. It catalyses the reaction 3'-dephospho-CoA + ATP = ADP + CoA + H(+). The protein operates within cofactor biosynthesis; coenzyme A biosynthesis; CoA from (R)-pantothenate: step 5/5. In terms of biological role, catalyzes the phosphorylation of the 3'-hydroxyl group of dephosphocoenzyme A to form coenzyme A. The polypeptide is Dephospho-CoA kinase (Campylobacter jejuni subsp. jejuni serotype O:2 (strain ATCC 700819 / NCTC 11168)).